The chain runs to 92 residues: PqqA binding protein (92 aa).

The protein belongs to the PqqD family. In terms of assembly, monomer. Interacts with PqqE.

Its pathway is cofactor biosynthesis; pyrroloquinoline quinone biosynthesis. In terms of biological role, functions as a PqqA binding protein and presents PqqA to PqqE, in the pyrroloquinoline quinone (PQQ) biosynthetic pathway. In Xanthomonas euvesicatoria pv. vesicatoria (strain 85-10) (Xanthomonas campestris pv. vesicatoria), this protein is PqqA binding protein.